The chain runs to 22 residues: Antimicrobial peptide 4 (22 aa).

As to expression, expressed by the skin glands.

It is found in the secreted. Its function is as follows. Has very strong antimicrobial activity against Gram-positive bacterium S.aureus and yeast C.albicans, and very weak activity against Gram-negative bacterium E.coli. Has strong hemolytic activity against human red blood cells. In Xenopus tropicalis (Western clawed frog), this protein is Antimicrobial peptide 4.